Here is an 866-residue protein sequence, read N- to C-terminus: N-alpha-acetyltransferase 15, NatA auxiliary subunit (866 aa).

TPR repeat units lie at residues 46–79 (GETL…DLKS), 80–113 (HVCW…DKDN), 148–184 (RASW…SPDK), and 224–257 (LAVE…NPEN). Position 262 is an N6-acetyllysine (Lys-262). A Phosphoserine modification is found at Ser-302. 3 TPR repeats span residues 374–407 (LWVQ…TPTL), 409–441 (ELFL…DTAD), and 485–522 (MWFQ…TDDQ). The interaction with HYPK stretch occupies residues 500–866 (KFGEALKKCY…AEAEELANEI (367 aa)). Phosphoserine occurs at positions 537 and 588. The segment covering 579–594 (EHEADTANMSDKELKK) has biased composition (basic and acidic residues). The interval 579 to 642 (EHEADTANMS…EEIGGPKEEL (64 aa)) is disordered. Residues 595–604 (LRNKQRRAQK) are compositionally biased toward basic residues. The span at 606-621 (AQIEEEKKNAEKEKQQ) shows a compositional bias: basic and acidic residues. One copy of the TPR 8 repeat lies at 672–705 (IETHLFAFEIYFRKEKFLLMLQSVKRAFAIDSSH). Residues Lys-735 and Lys-756 each carry the N6-acetyllysine modification. Residues Ser-855 and Ser-856 each carry the phosphoserine modification.

As to quaternary structure, component of the N-terminal acetyltransferase A (NatA) complex composed of NAA10 or probably NAA11 and NAA15. Interacts with XRCC6, NAA50 and XRCC5. Associates with HYPK when in a complex with NAA10. Interaction with HYPK reduces the capacity to interact with NAA50. In terms of processing, cleaved by caspases during apoptosis.

The protein resides in the cytoplasm. It is found in the nucleus. Auxillary subunit of the N-terminal acetyltransferase A (NatA) complex which displays alpha (N-terminal) acetyltransferase activity. The NAT activity may be important for vascular, hematopoietic and neuronal growth and development. Required to control retinal neovascularization in adult ocular endothelial cells. In complex with XRCC6 and XRCC5 (Ku80), up-regulates transcription from the osteocalcin promoter. In Pongo abelii (Sumatran orangutan), this protein is N-alpha-acetyltransferase 15, NatA auxiliary subunit (NAA15).